A 62-amino-acid chain; its full sequence is Large ribosomal subunit protein eL24 (62 aa).

Residues C6, C9, C32, and C36 each contribute to the Zn(2+) site. A C4-type zinc finger spans residues 6–36; the sequence is CSFCGELLEPGTGLLFAKRDGSTYYFCSSKC.

The protein belongs to the eukaryotic ribosomal protein eL24 family. In terms of assembly, part of the 50S ribosomal subunit. Forms a cluster with proteins L3 and L14. Requires Zn(2+) as cofactor.

Binds to the 23S rRNA. This Methanococcoides burtonii (strain DSM 6242 / NBRC 107633 / OCM 468 / ACE-M) protein is Large ribosomal subunit protein eL24.